A 304-amino-acid chain; its full sequence is Acetaldehyde dehydrogenase (304 aa).

Catalysis depends on C131, which acts as the Acyl-thioester intermediate. Residues 162 to 170 and N273 each bind NAD(+); that span reads SAGPGTRKN.

Belongs to the acetaldehyde dehydrogenase family.

It carries out the reaction acetaldehyde + NAD(+) + CoA = acetyl-CoA + NADH + H(+). The protein is Acetaldehyde dehydrogenase of Polaromonas naphthalenivorans (strain CJ2).